Consider the following 880-residue polypeptide: DNA mismatch repair protein MutS (880 aa).

624–631 (GPNMAGKS) is an ATP binding site.

It belongs to the DNA mismatch repair MutS family.

In terms of biological role, this protein is involved in the repair of mismatches in DNA. It is possible that it carries out the mismatch recognition step. This protein has a weak ATPase activity. This chain is DNA mismatch repair protein MutS, found in Alkaliphilus metalliredigens (strain QYMF).